An 85-amino-acid polypeptide reads, in one-letter code: Large ribosomal subunit protein bL27 (85 aa).

The segment at 1 to 21 is disordered; sequence MAHKKAGGSTRNGRDSESKRL.

Belongs to the bacterial ribosomal protein bL27 family.

This is Large ribosomal subunit protein bL27 from Ectopseudomonas mendocina (strain ymp) (Pseudomonas mendocina).